A 207-amino-acid polypeptide reads, in one-letter code: Negative modulator of initiation of replication (207 aa).

Residues 43–54 (ATPITSSVTPSA) show a composition bias toward polar residues. A disordered region spans residues 43–63 (ATPITSSVTPSAPRQEAVNDE).

It belongs to the SeqA family. In terms of assembly, homodimer. Polymerizes to form helical filaments.

It is found in the cytoplasm. Negative regulator of replication initiation, which contributes to regulation of DNA replication and ensures that replication initiation occurs exactly once per chromosome per cell cycle. Binds to pairs of hemimethylated GATC sequences in the oriC region, thus preventing assembly of replication proteins and re-initiation at newly replicated origins. Repression is relieved when the region becomes fully methylated. This chain is Negative modulator of initiation of replication, found in Psychromonas ingrahamii (strain DSM 17664 / CCUG 51855 / 37).